A 234-amino-acid polypeptide reads, in one-letter code: Carboxymethylenebutenolidase 1 (234 aa).

Catalysis depends on residues Cys-123, Asp-171, and His-201.

It belongs to the dienelactone hydrolase family. Monomer.

The catalysed reaction is 2-(5-oxo-2,5-dihydrofuran-2-ylidene)acetate + H2O = 4-oxohex-2-enedioate + H(+). The protein operates within aromatic compound metabolism; 3-chlorocatechol degradation. In terms of biological role, ring cleavage of cyclic ester dienelactone to produce maleylacetate. The protein is Carboxymethylenebutenolidase 1 (tfdEI) of Cupriavidus pinatubonensis (strain JMP 134 / LMG 1197) (Cupriavidus necator (strain JMP 134)).